A 749-amino-acid chain; its full sequence is Metabotropic glutamate receptor-like protein M (749 aa).

An N-terminal signal peptide occupies residues 1–22 (MIKLILSLIFLIICCNINPSES). The Extracellular segment spans residues 23-385 (FKLITLTTGP…KIEFSSSVQK (363 aa)). 5 N-linked (GlcNAc...) asparagine glycosylation sites follow: N67, N164, N257, N271, and N345. The helical transmembrane segment at 386–406 (GFSIVSGCLIAFVILMMVGIV) threads the bilayer. Over 407–419 (YYKDTPSIRSASP) the chain is Cytoplasmic. The helical transmembrane segment at 420-440 (IFLNFSLIGGIIIYIGIIIWV) threads the bilayer. The Extracellular segment spans residues 441–456 (GPISTHQCNARFWLVT). A helical membrane pass occupies residues 457–477 (LGFSTLIGSLVVKNFRIWLIF). At 478–492 (DNPELKAIKITNYQL) the chain is on the cytoplasmic side. The helical transmembrane segment at 493 to 513 (FPWVGLCLVINIVLMAILTSV) threads the bilayer. Topologically, residues 514–544 (GDLKAIEAQGIDSLGKYEYMTVCKMNSAGAS) are extracellular. A helical transmembrane segment spans residues 545-565 (TLYSILAYFAALLLVGVFVSW). At 566 to 579 (KIRIVDIEEFNESK) the chain is on the cytoplasmic side. A helical transmembrane segment spans residues 580–600 (AIANTLYAVSFCLFVIVPLMI). Residues 601 to 609 (SPQEKQSET) lie on the Extracellular side of the membrane. The chain crosses the membrane as a helical span at residues 610–630 (IILCVAGLFITTAALLIVFIP). The Cytoplasmic portion of the chain corresponds to 631-749 (KFWRVFIYGK…EEPVKTESQE (119 aa)). The disordered stretch occupies residues 658-749 (ARAESLSKNS…EEPVKTESQE (92 aa)). The span at 698–716 (SSLSEPNKPTKNNDGNVNV) shows a compositional bias: polar residues. Acidic residues predominate over residues 725 to 740 (FTDDTISEFDENEVNE).

It in the N-terminal section; belongs to the BMP lipoprotein family. The protein in the C-terminal section; belongs to the G-protein coupled receptor 3 family. GABA-B receptor subfamily.

It localises to the membrane. The protein is Metabotropic glutamate receptor-like protein M (grlM) of Dictyostelium discoideum (Social amoeba).